The following is a 102-amino-acid chain: Large ribosomal subunit protein bL21 (102 aa).

The protein belongs to the bacterial ribosomal protein bL21 family. As to quaternary structure, part of the 50S ribosomal subunit. Contacts protein L20.

Functionally, this protein binds to 23S rRNA in the presence of protein L20. This Lachnospira eligens (strain ATCC 27750 / DSM 3376 / VPI C15-48 / C15-B4) (Eubacterium eligens) protein is Large ribosomal subunit protein bL21.